We begin with the raw amino-acid sequence, 222 residues long: Glutathione S-transferase A4 (222 aa).

The residue at position 1 (M1) is an N-acetylmethionine. Residues 3 to 83 (ARPKLHYPNG…YIADKHNLFG (81 aa)) enclose the GST N-terminal domain. Glutathione contacts are provided by residues Y9, 54–55 (QV), and 67–68 (QT). Positions 85–208 (NLKERTLIDM…EPGSKKKPPP (124 aa)) constitute a GST C-terminal domain. A substrate-binding site is contributed by Y212.

This sequence belongs to the GST superfamily. Alpha family. In terms of assembly, homodimer. As to expression, expressed at a high level in brain, placenta, and skeletal muscle and much lower in lung and liver.

It localises to the cytoplasm. The enzyme catalyses RX + glutathione = an S-substituted glutathione + a halide anion + H(+). Functionally, conjugation of reduced glutathione to a wide number of exogenous and endogenous hydrophobic electrophiles. This isozyme has a high catalytic efficiency with 4-hydroxyalkenals such as 4-hydroxynonenal (4-HNE). The chain is Glutathione S-transferase A4 (GSTA4) from Homo sapiens (Human).